Here is a 354-residue protein sequence, read N- to C-terminus: Protein RecA (354 aa).

67 to 74 is an ATP binding site; sequence GPESSGKT. Residues 331–354 are disordered; sequence NQDSTPDFSVDDNGEGVKETNEDF. A compositionally biased stretch (basic and acidic residues) spans 345 to 354; it reads EGVKETNEDF.

The protein belongs to the RecA family.

It localises to the cytoplasm. Functionally, can catalyze the hydrolysis of ATP in the presence of single-stranded DNA, the ATP-dependent uptake of single-stranded DNA by duplex DNA, and the ATP-dependent hybridization of homologous single-stranded DNAs. It interacts with LexA causing its activation and leading to its autocatalytic cleavage. This Citrobacter koseri (strain ATCC BAA-895 / CDC 4225-83 / SGSC4696) protein is Protein RecA.